The following is a 185-amino-acid chain: Lipopolysaccharide export system protein LptA (185 aa).

Residues 1 to 27 form the signal peptide; sequence MKFKTNKLSLNLVLASSLLAASIPAFA. The segment at 166–185 is disordered; it reads PSQLQDKNNKGQTPAQKKGN.

It belongs to the LptA family. In terms of assembly, component of the lipopolysaccharide transport and assembly complex.

The protein localises to the periplasm. In terms of biological role, involved in the assembly of lipopolysaccharide (LPS). Required for the translocation of LPS from the inner membrane to the outer membrane. May form a bridge between the inner membrane and the outer membrane, via interactions with LptC and LptD, thereby facilitating LPS transfer across the periplasm. The sequence is that of Lipopolysaccharide export system protein LptA from Escherichia coli O157:H7.